The chain runs to 555 residues: Disabled homolog 1 (555 aa).

The tract at residues 1 to 26 is disordered; sequence MSTETELQVAVKTSAKKDSRKKGQDR. Positions 15 to 26 are enriched in basic and acidic residues; it reads AKKDSRKKGQDR. Positions 36 to 189 constitute a PID domain; it reads KGEGVRYKAK…CEQAVYQTIL (154 aa). Phosphotyrosine is present on residues Y198, Y220, and Y232. Disordered regions lie at residues 386–409 and 469–555; these read PLAT…PRQK and LTPV…QDGS. A compositionally biased stretch (polar residues) spans 391 to 403; that stretch reads PGTNDSARSSPQS. Composition is skewed to low complexity over residues 470–479 and 490–501; these read TPVTSTTPST and SSPSKSSASHVS. Position 491 is a phosphoserine; by CDK5 (S491). Residues 504-513 are compositionally biased toward acidic residues; sequence TADDIFEEGF.

In terms of assembly, associates with the SH2 domains of SRC, FYN and ABL. Interacts (phosphorylated on tyrosine residues) with CRK and CRKL (via respective SH2 domain). Interacts with SIAH1, LRP8 and VLDLR. Interacts with LRP1. Interacts with APLP1 (via NPXY motif). Interacts with DAB2IP. Interacts with ZSWIM8. In terms of processing, phosphorylated by FYN on Tyr-198 and Tyr-220 upon reelin induction in embryonic neurons. Also phosphorylated on Ser-491 independently of reelin signaling. Post-translationally, ubiquitinated by various cullin-5-RING E3 ubiquitin-protein ligase complexes (ECS complexes) following ligand-binding and phosphorylation, leading to its degradation. Ubiquitinated by the ECS(SOCS7) complex in the cortical plate of the developing cerebral cortex following ligand-binding and phosphorylation by FYN, leading to its degradation by the proteasome. Recognized by ZSWIM8 through a disorder targets misorder mechanism that eliminates misfolded DAB1 via ubiquitination and proteasomal degradation.

Its subcellular location is the cytoplasm. Its function is as follows. Signaling adapter of the reelin-mediated signaling pathway, which regulates the migration and differentiation of postmitotic neurons during brain development. Mediates intracellular transduction of Reelin signaling following reelin (RELN)-binding to its receptor: acts by docking proteins through its phosphotyrosine residues and PID domain. The polypeptide is Disabled homolog 1 (Dab1) (Rattus norvegicus (Rat)).